The sequence spans 346 residues: MIKISIDAMGGDFGPEVVIPGAAKAFERHPDIRFIFFGLPAQVEPVLARYPKLKEASEFRASEVAIGMDDKPSQALRAGRGKSSMWQAIEAVKTGDADACVSAGNTGALMAMSKFCLRMMSDVERPAIAGIWPTLRGESIVLDIGATIGADARQLVDYAVMGAGIARALFEVRKPTVGLLNVGTEEVKGLDEIKEAGQILRDTPLDGLEYSGFVEGNDIGKGTVDVVVTEGFTGNIALKTAEGTARQMAELLRQAMSRTLLAKIGYVFAKGAFDRLREKMDPNKVNGGVFLGLSGIVIKSHGGANAEGFCSAVEVGYDMVRNRLLEKIEADLAHFHHSHSHVSSKA.

It belongs to the PlsX family. In terms of assembly, homodimer. Probably interacts with PlsY.

Its subcellular location is the cytoplasm. It carries out the reaction a fatty acyl-[ACP] + phosphate = an acyl phosphate + holo-[ACP]. Its pathway is lipid metabolism; phospholipid metabolism. Functionally, catalyzes the reversible formation of acyl-phosphate (acyl-PO(4)) from acyl-[acyl-carrier-protein] (acyl-ACP). This enzyme utilizes acyl-ACP as fatty acyl donor, but not acyl-CoA. The chain is Phosphate acyltransferase from Brucella suis biovar 1 (strain 1330).